The chain runs to 535 residues: KNR4/SMI1 homolog (535 aa).

Positions 354 to 363 are enriched in basic and acidic residues; it reads ERKLPEEPKR. The disordered stretch occupies residues 354–535; sequence ERKLPEEPKR…LKDDFENVAL (182 aa). Composition is skewed to polar residues over residues 364 to 384, 397 to 407, and 456 to 469; these read TVSSSQGSQNTVEPAEQQETA, TSLSVDNTGTK, and ESTNAVENTETSQE. Residues 474–483 show a composition bias toward basic and acidic residues; sequence TSEKPEEKPK. Residues 484–494 show a composition bias toward basic residues; that stretch reads KQSKKASKKKG. Basic and acidic residues-rich tracts occupy residues 495 to 509 and 524 to 535; these read KKDEKKDTDSKTKEP and EKLKDDFENVAL.

It belongs to the KNR4/SMI1 family.

The polypeptide is KNR4/SMI1 homolog (Kluyveromyces lactis (strain ATCC 8585 / CBS 2359 / DSM 70799 / NBRC 1267 / NRRL Y-1140 / WM37) (Yeast)).